The primary structure comprises 20 residues: U1-poneritoxin-Ni1a (20 aa).

The residue at position 20 (lysine 20) is a Lysine amide.

The protein belongs to the non-disulfide-bridged peptide (NDBP) superfamily. Medium-length antimicrobial peptide (group 3) family. Ponericin-W subfamily. As to expression, expressed by the venom gland.

Its subcellular location is the secreted. It is found in the target cell membrane. Functionally, has activity against Gram-positive bacteria. Has insecticidal and hemolytic activities. May act by disrupting the integrity of the bacterial cell membrane. This Neoponera inversa (Ant) protein is U1-poneritoxin-Ni1a.